Consider the following 760-residue polypeptide: MSHATHLLGFPRIGAKRELKTLLERYWKQELDEAALSQGAKELRQKHWLLQKGAGVELSPVGDFSLYDHVLDAQLLVGAAPARFGFDAAALTTGQYFELARGNAVQPAMEMTKWFDTNYHYLVPEWHADTAFSAQPERLLSQLREARALGVAAKPVLLGPLSLLWLGKAKGRPFDRLALLPGLVAAYRELLSSLRAAGAEWAQIDEPILALDLEPSWLDAFAPAYAQLSRHAPKLLLATYFGDVSEHAARLKSLPVAGLHLDLVRAPEQISAFLPDYPADKVLSAGIVDGRNIWRADLSALLDRLAPLAQQLGDRLWLAPSCSLLHSPFDAAAETGLDPELKNWLAFAVQKLNELKTLKRGLEHGRSAIAGELSGSDFAREQRRASPRIHDPAVARRLAALPEGTDRRASPYPIRAERQQAWLKLPPLPTTTIGSFPQTPAIRASRAAFKKGELSAAGYRQAMEKEIELAIRRQEALGLDVLVHGEAERNDMVEYFGEQLAGFAFTAGGWVQSYGSRCVKPPIIFGDVARPKPMTVDWARYAQSLTAKPVKGMLTGPVTILQWSFVRDDLPRREVCRQIALALNDEVLDLEAAGIRVIQIDEPAIREGLPLKRAGRDVYLAWAGEAFRLSSRGVDDATQIHTHMCYSEFGDILPAIAALDADVITIETSRSDMALLADFGRFRYPNAIGPGVYDIHSPRVPSAAEIRALLDKALRVIPAERLWVNPDCGLKTRGWPEVEAALAAMVAVGRELREKLAQAA.

5-methyltetrahydropteroyltri-L-glutamate is bound by residues 17-20 and Lys113; that span reads RELK. L-homocysteine-binding positions include 433–435 and Glu486; that span reads IGS. Residues 433–435 and Glu486 each bind L-methionine; that span reads IGS. Residues 517 to 518 and Trp563 each bind 5-methyltetrahydropteroyltri-L-glutamate; that span reads RC. Residue Asp601 participates in L-homocysteine binding. Asp601 provides a ligand contact to L-methionine. Glu607 provides a ligand contact to 5-methyltetrahydropteroyltri-L-glutamate. The Zn(2+) site is built by His643, Cys645, and Glu667. Catalysis depends on His696, which acts as the Proton donor. Cys728 is a Zn(2+) binding site.

The protein belongs to the vitamin-B12 independent methionine synthase family. Zn(2+) is required as a cofactor.

The enzyme catalyses 5-methyltetrahydropteroyltri-L-glutamate + L-homocysteine = tetrahydropteroyltri-L-glutamate + L-methionine. It functions in the pathway amino-acid biosynthesis; L-methionine biosynthesis via de novo pathway; L-methionine from L-homocysteine (MetE route): step 1/1. Catalyzes the transfer of a methyl group from 5-methyltetrahydrofolate to homocysteine resulting in methionine formation. The protein is 5-methyltetrahydropteroyltriglutamate--homocysteine methyltransferase of Chromobacterium violaceum (strain ATCC 12472 / DSM 30191 / JCM 1249 / CCUG 213 / NBRC 12614 / NCIMB 9131 / NCTC 9757 / MK).